A 337-amino-acid chain; its full sequence is Ribosomal RNA small subunit methyltransferase C (337 aa).

The protein belongs to the methyltransferase superfamily. RsmC family. Monomer.

It is found in the cytoplasm. The catalysed reaction is guanosine(1207) in 16S rRNA + S-adenosyl-L-methionine = N(2)-methylguanosine(1207) in 16S rRNA + S-adenosyl-L-homocysteine + H(+). Functionally, specifically methylates the guanine in position 1207 of 16S rRNA in the 30S particle. The polypeptide is Ribosomal RNA small subunit methyltransferase C (Acinetobacter baumannii (strain AB307-0294)).